The sequence spans 321 residues: Glycerol-3-phosphate dehydrogenase [NAD(P)+] (321 aa).

NADPH-binding residues include serine 14, phenylalanine 15, arginine 35, and lysine 109. The sn-glycerol 3-phosphate site is built by lysine 109 and glycine 137. Residue alanine 141 coordinates NADPH. Sn-glycerol 3-phosphate-binding residues include lysine 192, aspartate 252, serine 262, arginine 263, and asparagine 264. Lysine 192 functions as the Proton acceptor in the catalytic mechanism. Residue arginine 263 participates in NADPH binding. Leucine 287 and glutamate 289 together coordinate NADPH.

This sequence belongs to the NAD-dependent glycerol-3-phosphate dehydrogenase family.

Its subcellular location is the cytoplasm. The catalysed reaction is sn-glycerol 3-phosphate + NAD(+) = dihydroxyacetone phosphate + NADH + H(+). The enzyme catalyses sn-glycerol 3-phosphate + NADP(+) = dihydroxyacetone phosphate + NADPH + H(+). Its pathway is membrane lipid metabolism; glycerophospholipid metabolism. Functionally, catalyzes the reduction of the glycolytic intermediate dihydroxyacetone phosphate (DHAP) to sn-glycerol 3-phosphate (G3P), the key precursor for phospholipid synthesis. In Rickettsia felis (strain ATCC VR-1525 / URRWXCal2) (Rickettsia azadi), this protein is Glycerol-3-phosphate dehydrogenase [NAD(P)+].